The chain runs to 389 residues: Chalcone synthase 1 (389 aa).

Cysteine 164 is a catalytic residue.

It belongs to the thiolase-like superfamily. Chalcone/stilbene synthases family.

The enzyme catalyses (E)-4-coumaroyl-CoA + 3 malonyl-CoA + 3 H(+) = 2',4,4',6'-tetrahydroxychalcone + 3 CO2 + 4 CoA. It participates in secondary metabolite biosynthesis; flavonoid biosynthesis. Its function is as follows. The primary product of this enzyme is 4,2',4',6'-tetrahydroxychalcone (also termed naringenin-chalcone or chalcone) which can under specific conditions spontaneously isomerize into naringenin. The polypeptide is Chalcone synthase 1 (CHS1) (Camellia sinensis (Tea plant)).